A 72-amino-acid chain; its full sequence is Teretoxin Tsu11.2 (72 aa).

The N-terminal stretch at 1–21 is a signal peptide; it reads MMAKATMAFCFLLMLTTVMLP. A propeptide spanning residues 22–30 is cleaved from the precursor; that stretch reads TEGKTIAGR.

Belongs to the teretoxin H (TH) superfamily. In terms of processing, contains 4 disulfide bonds. Expressed by the venom duct.

It is found in the secreted. This chain is Teretoxin Tsu11.2, found in Terebra subulata (Chocolate spotted auger).